Consider the following 137-residue polypeptide: L-ectoine synthase (137 aa).

The segment at 118 to 137 is disordered; sequence VHREDGSYAPADEADDQKPL.

This sequence belongs to the ectoine synthase family.

The enzyme catalyses (2S)-4-acetamido-2-aminobutanoate = L-ectoine + H2O. It functions in the pathway amine and polyamine biosynthesis; ectoine biosynthesis; L-ectoine from L-aspartate 4-semialdehyde: step 3/3. Seems to require potassium ions for its activity and stability. Slightly inhibited by N-ethylmaleimide. In terms of biological role, catalyzes the circularization of gamma-N-acetyl-alpha,gamma-diaminobutyric acid (ADABA) to ectoine (1,4,5,6-tetrahydro-2-methyl-4-pyrimidine carboxylic acid), which is an excellent osmoprotectant. Does not act on N-acetylated amino acids like N-alpha-acetyl-L-asparagine,N-alpha-acetyl-L-ornithine, N-alpha-acetyl-L-lysine and N-epsilon-acetyl-L-lysine. This Halomonas elongata (strain ATCC 33173 / DSM 2581 / NBRC 15536 / NCIMB 2198 / 1H9) protein is L-ectoine synthase (ectC).